We begin with the raw amino-acid sequence, 734 residues long: Cleavage stimulation factor subunit 77 (734 aa).

12 HAT repeats span residues 20–52 (SPIA…AQMA), 54–85 (NNDD…FIRK), 93–128 (EGQE…FLKS), 139–172 (HRKT…FENT), 198–237 (ERKK…FEKG), 246–278 (SSTK…WHVK), 280–312 (GSTD…MEES), 314–345 (GAIQ…FLRR), 347–379 (EGVE…MAFC), 382–414 (KEPK…FLTR), 416–450 (NDDR…FEQT), and 474–505 (EGSS…DLDH). Residues 637–734 (VKQSFAAKGN…FSGELSGSTG (98 aa)) are disordered. The span at 664-677 (LPRDRRATKRKDSD) shows a compositional bias: basic and acidic residues. The segment covering 709–734 (ATSSQTPTGSTSYGSAFSGELSGSTG) has biased composition (polar residues).

Homodimer. Belongs to the CSTF complex. Forms a complex with cleavage and polyadenylation specificity factor (CPSF) subunits CPSF30, CSTF64, PCFS1, PCFS5 and FIPS5.

It is found in the nucleus. Its function is as follows. One of the multiple factors required for polyadenylation and 3'-end cleavage of pre-mRNAs. Required for the targeted 3' processing of antisense transcripts that triggers transcriptional silencing of the corresponding sense gene. The polypeptide is Cleavage stimulation factor subunit 77 (Arabidopsis thaliana (Mouse-ear cress)).